The following is a 95-amino-acid chain: Orphan antitoxin ParD2 (95 aa).

Antitoxin component of a non-functional type II toxin-antitoxin (TA system). Does not neutralize the effect of any of the RelE or ParE toxins. This chain is Orphan antitoxin ParD2 (parD2), found in Caulobacter vibrioides (strain ATCC 19089 / CIP 103742 / CB 15) (Caulobacter crescentus).